A 345-amino-acid chain; its full sequence is NADPH dehydrogenase (345 aa).

23–26 (SPMC) is a binding site for FMN. Y28 lines the substrate pocket. 2 residues coordinate FMN: A60 and Q102. 164 to 167 (HGAH) provides a ligand contact to substrate. FMN-binding positions include R215 and 307–308 (GR).

This sequence belongs to the NADH:flavin oxidoreductase/NADH oxidase family. NamA subfamily. In terms of assembly, homotetramer. It depends on FMN as a cofactor.

It catalyses the reaction A + NADPH + H(+) = AH2 + NADP(+). Functionally, catalyzes the reduction of the double bond of an array of alpha,beta-unsaturated aldehydes and ketones. It also reduces the nitro group of nitroester and nitroaromatic compounds. It could have a role in detoxification processes. This chain is NADPH dehydrogenase, found in Bacillus cereus (strain B4264).